The following is a 178-amino-acid chain: UPF0302 protein BCAH187_A1683 (178 aa).

It belongs to the UPF0302 family.

This is UPF0302 protein BCAH187_A1683 from Bacillus cereus (strain AH187).